Reading from the N-terminus, the 257-residue chain is Zinc transporter ZupT (257 aa).

A run of 8 helical transmembrane segments spans residues 5–25 (LILT…GVLG), 32–52 (LLAF…LMEM), 61–81 (GMSP…YFGL), 109–129 (AILL…ATFV), 137–157 (LGFG…LAVA), 171–191 (ILWA…AWLI), 195–215 (MISP…MVAL), and 236–256 (GVLC…TAGI). The Fe(2+) site is built by N120 and E123. Residues E123 and H148 each coordinate Zn(2+). Residues N149, E152, and E181 each contribute to the Fe(2+) site. Zn(2+) is bound at residue E152.

The protein belongs to the ZIP transporter (TC 2.A.5) family. ZupT subfamily.

The protein localises to the cell inner membrane. It carries out the reaction Zn(2+)(in) = Zn(2+)(out). Functionally, mediates zinc uptake. May also transport other divalent cations. This Shigella flexneri serotype 5b (strain 8401) protein is Zinc transporter ZupT.